We begin with the raw amino-acid sequence, 507 residues long: ATP synthase subunit alpha, chloroplastic (507 aa).

170–177 is an ATP binding site; sequence GDRQTGKT.

This sequence belongs to the ATPase alpha/beta chains family. As to quaternary structure, F-type ATPases have 2 components, CF(1) - the catalytic core - and CF(0) - the membrane proton channel. CF(1) has five subunits: alpha(3), beta(3), gamma(1), delta(1), epsilon(1). CF(0) has four main subunits: a, b, b' and c.

It localises to the plastid. The protein resides in the chloroplast thylakoid membrane. It catalyses the reaction ATP + H2O + 4 H(+)(in) = ADP + phosphate + 5 H(+)(out). Functionally, produces ATP from ADP in the presence of a proton gradient across the membrane. The alpha chain is a regulatory subunit. This Morus indica (Mulberry) protein is ATP synthase subunit alpha, chloroplastic.